Here is a 92-residue protein sequence, read N- to C-terminus: CRISPR-associated endoribonuclease Cas2 3 (92 aa).

Asp9 contributes to the Mg(2+) binding site.

The protein belongs to the CRISPR-associated endoribonuclease Cas2 protein family. Homodimer, forms a heterotetramer with a Cas1 homodimer. Mg(2+) serves as cofactor.

CRISPR (clustered regularly interspaced short palindromic repeat), is an adaptive immune system that provides protection against mobile genetic elements (viruses, transposable elements and conjugative plasmids). CRISPR clusters contain sequences complementary to antecedent mobile elements and target invading nucleic acids. CRISPR clusters are transcribed and processed into CRISPR RNA (crRNA). Functions as a ssRNA-specific endoribonuclease. Involved in the integration of spacer DNA into the CRISPR cassette. The protein is CRISPR-associated endoribonuclease Cas2 3 of Synechocystis sp. (strain ATCC 27184 / PCC 6803 / Kazusa).